Here is an 85-residue protein sequence, read N- to C-terminus: Serine protease inhibitor Kazal-type 7 (85 aa).

Residues 1 to 19 form the signal peptide; that stretch reads MKITGGLLLLCTVVYFCSS. One can recognise a Kazal-like domain in the interval 26–85; it reads SPKKVDCSIYKKYPVVAIPCPITYLPVCGSDYITYGNECHLCTESLKSNGRVQFLHDGSC. Disulfide bonds link C32/C67, C45/C64, and C53/C85.

The protein localises to the secreted. Functionally, probable serine protease inhibitor. This chain is Serine protease inhibitor Kazal-type 7 (SPINK7), found in Homo sapiens (Human).